A 315-amino-acid chain; its full sequence is DNA-directed RNA polymerase subunit alpha (315 aa).

Positions Met1–Ser228 are alpha N-terminal domain (alpha-NTD). Residues Ile238 to Ser315 are alpha C-terminal domain (alpha-CTD).

This sequence belongs to the RNA polymerase alpha chain family. In terms of assembly, in cyanobacteria the RNAP catalytic core is composed of 2 alpha, 1 beta, 1 beta', 1 gamma and 1 omega subunit. When a sigma factor is associated with the core the holoenzyme is formed, which can initiate transcription.

The catalysed reaction is RNA(n) + a ribonucleoside 5'-triphosphate = RNA(n+1) + diphosphate. Functionally, DNA-dependent RNA polymerase catalyzes the transcription of DNA into RNA using the four ribonucleoside triphosphates as substrates. The chain is DNA-directed RNA polymerase subunit alpha from Trichormus variabilis (strain ATCC 29413 / PCC 7937) (Anabaena variabilis).